Here is a 215-residue protein sequence, read N- to C-terminus: Mediator of RNA polymerase II transcription subunit 8 (215 aa).

The stretch at 27–89 (LDALRMKFSQ…YEETLDATVA (63 aa)) forms a coiled coil.

Belongs to the Mediator complex subunit 8 family. As to quaternary structure, component of the Mediator complex.

Its subcellular location is the nucleus. Its function is as follows. Component of the Mediator complex, a coactivator involved in the regulated transcription of nearly all RNA polymerase II-dependent genes. Mediator functions as a bridge to convey information from gene-specific regulatory proteins to the basal RNA polymerase II transcription machinery. Mediator is recruited to promoters by direct interactions with regulatory proteins and serves as a scaffold for the assembly of a functional preinitiation complex with RNA polymerase II and the general transcription factors. This is Mediator of RNA polymerase II transcription subunit 8 (MED8) from Kluyveromyces lactis (strain ATCC 8585 / CBS 2359 / DSM 70799 / NBRC 1267 / NRRL Y-1140 / WM37) (Yeast).